We begin with the raw amino-acid sequence, 470 residues long: mRNA export factor ICP27 homolog (470 aa).

Disordered stretches follow at residues 1-31 (MALS…TGGD) and 62-204 (VGDP…DRLN). A compositionally biased stretch (polar residues) spans 71-85 (VSFSASPQRAQPSNP). 2 stretches are compositionally biased toward basic residues: residues 94–107 (HGRR…RRNN) and 178–187 (RVHRNRRRGN). Positions 359, 437, 441, and 446 each coordinate Zn(2+). A CHC2-type zinc finger spans residues 359 to 446 (CYLSSSGSPT…HKRRCKADTC (88 aa)).

This sequence belongs to the HHV-1 ICP27 protein family. Homodimer. Homodimerization is required for transactivation. Associates in a complex with RNA, and host export factors NXF1/TAP and ALYREF; these interactions allow nuclear export of viral transcripts. Interacts with three host shuttling SR proteins SRSF1, SRSF3 and SRSF7. Interacts with host SRPK1. Interacts with IE62; this interaction enhances IE62 transactivation.

Its subcellular location is the host cytoplasm. It localises to the host nucleus. Functionally, multifunctional regulator of the expression of viral genes that mediates nuclear export of viral intronless mRNAs. This immediate early (EI) protein promotes the nuclear export of viral intronless mRNAs by interacting with mRNAs and host NXF1/TAP. This chain is mRNA export factor ICP27 homolog, found in Equine herpesvirus 1 (strain Ab4p) (EHV-1).